The primary structure comprises 275 residues: 2,3,4,5-tetrahydropyridine-2,6-dicarboxylate N-succinyltransferase (275 aa).

Positions 106 and 143 each coordinate substrate.

Belongs to the transferase hexapeptide repeat family. As to quaternary structure, homotrimer.

It localises to the cytoplasm. The catalysed reaction is (S)-2,3,4,5-tetrahydrodipicolinate + succinyl-CoA + H2O = (S)-2-succinylamino-6-oxoheptanedioate + CoA. Its pathway is amino-acid biosynthesis; L-lysine biosynthesis via DAP pathway; LL-2,6-diaminopimelate from (S)-tetrahydrodipicolinate (succinylase route): step 1/3. The protein is 2,3,4,5-tetrahydropyridine-2,6-dicarboxylate N-succinyltransferase of Cupriavidus necator (strain ATCC 17699 / DSM 428 / KCTC 22496 / NCIMB 10442 / H16 / Stanier 337) (Ralstonia eutropha).